Consider the following 702-residue polypeptide: uncharacterized protein (702 aa).

Low complexity-rich tracts occupy residues 306-384 (NNNN…NNNN), 488-511 (PTKT…TNIT), 559-590 (QQSQ…NNNN), 603-612 (SNQNSNNNNQ), and 621-639 (NNNN…NNNN). 3 disordered regions span residues 306–385 (NNNN…NNNE), 488–513 (PTKT…ITYG), and 551–645 (STMN…NSRY). The region spanning 337-489 (NNINNNINNN…IKSLDILSPT (153 aa)) is the VPS9 domain.

This is an uncharacterized protein from Dictyostelium discoideum (Social amoeba).